The primary structure comprises 578 residues: MSPKALNVRVTTMDAELEFAIQSTTTGKQLFDQVVKTIGLREVWFFGLQYTDSKGDSTWIKLYKKVMNQDVKKENPLQFRFRAKFYPEDVAEELIQDITLRLFYLQVKNAILTDEIYCPPETSVLLASYAVQARHGDHNKTTHTAGFLANDRLLPQRVIDQHKMSKDEWEQSIMTWWQEHRSMLREDAMMEYLKIAQDLEMYGVNYFEIRNKKGTDLWLGVDALGLNIYEQDDRLTPKIGFPWSEIRNISFSEKKFIIKPIDKKAPDFMFFAPRVRINKRILALCMGNHELYMRRRKPDTIDVQQMKAQAREEKNAKQQEREKLQLALAARERAEKKQQEYEDRLKQMQEDMERSQRDLLEAQDMIRRLEEQLKQLQAAKDELELRQKELQAMLQRLEEAKNMEAVEKLKLEEEIMAKQMEVQRIQDEVNAKDEETKRLQDEVEDARRKQVIAAEAAAALLAASTTPQHHHVAEDENENEEELTNGDAGGDVSRDLDTDEHIKDPIEDRRTLAERNERLHDQLKALKQDLAQSRDETKETANDKIHRENVRQGRDKYKTLREIRKGNTKRRVDQFENM.

The FERM domain occupies 1–296; sequence MSPKALNVRV…GNHELYMRRR (296 aa). Residues 463 to 555 form a disordered region; sequence ASTTPQHHHV…HRENVRQGRD (93 aa). Acidic residues predominate over residues 475–484; it reads DENENEEELT. Positions 492–555 are enriched in basic and acidic residues; it reads VSRDLDTDEH…HRENVRQGRD (64 aa). At T559 the chain carries Phosphothreonine.

As to quaternary structure, interacts with wgn. Interacts with Mer and arm at the adherens junction. Interacts with cytoskeletal actin at apical buds of microvilli in the precellularised embryo. Interacts with PCID2 (possibly via FERM domain). Post-translationally, phosphorylated on Thr-559. In the oocyte this phosphorylation is induced by phosphatidylinositol 4,5-bisphosphate (PtdIns[4,5]P(2)) generated by sktl.

It localises to the cell junction. The protein localises to the adherens junction. It is found in the cell projection. The protein resides in the microvillus. Its subcellular location is the rhabdomere. It localises to the cell membrane. The protein localises to the cytoplasm. It is found in the cytoskeleton. The protein resides in the cell cortex. Its subcellular location is the cilium. It localises to the flagellum. The protein localises to the nucleus. It is found in the nucleoplasm. The protein resides in the chromosome. Functionally, involved in connections of major cytoskeletal structures to the plasma membrane. Together with wgn, involved in control of axon targeting of R8 and R2-R5 photoreceptors, independent of egr. In the nucleus, recruited to sites of active transcription by RNA polymerase II where it has a role in nuclear mRNA export together with the mRNA export factor PCID2 and other messenger ribonucleoprotein (mRNP) particles. The protein is Moesin/ezrin/radixin homolog 1 (Moe) of Drosophila melanogaster (Fruit fly).